We begin with the raw amino-acid sequence, 226 residues long: Fibronectin type III domain-containing protein 9 (226 aa).

The Fibronectin type-III domain occupies 1 to 101 (MNIEVGNVSH…FHTLDKSPLA (101 aa)). Residues 113–133 (LWVLMAILLACFTAVLAFICL) form a helical membrane-spanning segment.

The protein resides in the membrane. The chain is Fibronectin type III domain-containing protein 9 (Fndc9) from Mus musculus (Mouse).